A 312-amino-acid polypeptide reads, in one-letter code: uncharacterized protein (312 aa).

Position 112–118 (112–118) interacts with ATP; that stretch reads LIGLPMV.

The protein belongs to the MurCDEF family.

This is an uncharacterized protein from Methanothermobacter thermautotrophicus (strain ATCC 29096 / DSM 1053 / JCM 10044 / NBRC 100330 / Delta H) (Methanobacterium thermoautotrophicum).